A 114-amino-acid polypeptide reads, in one-letter code: MQQAKAIARYVRISPRKVRQVVDLIRGKNVSDALAILQFTPKGATEPVTKVLQSAVANAEHNYEMDTDALIVKEIYVDEGPTLKRIKPRAMGRADQIRKRTSHITVVVVEKKEG.

It belongs to the universal ribosomal protein uL22 family. As to quaternary structure, part of the 50S ribosomal subunit.

Functionally, this protein binds specifically to 23S rRNA; its binding is stimulated by other ribosomal proteins, e.g. L4, L17, and L20. It is important during the early stages of 50S assembly. It makes multiple contacts with different domains of the 23S rRNA in the assembled 50S subunit and ribosome. Its function is as follows. The globular domain of the protein is located near the polypeptide exit tunnel on the outside of the subunit, while an extended beta-hairpin is found that lines the wall of the exit tunnel in the center of the 70S ribosome. The sequence is that of Large ribosomal subunit protein uL22 from Desulfitobacterium hafniense (strain Y51).